The sequence spans 461 residues: Phosphatidate cytidylyltransferase 1 (461 aa).

The tract at residues 1–67 (MLELRHRGSC…IPEIPPSSDR (67 aa)) is disordered. Arg7 bears the Omega-N-methylarginine mark. Over residues 20–56 (PHREGEAAGGDHETESTSDKETDIDDRYGDLDSRTDS) the composition is skewed to basic and acidic residues. Phosphoserine is present on residues Ser35 and Ser37. The next 6 helical transmembrane spans lie at 96–116 (MISL…LLVL), 149–169 (FLLC…FATF), 183–203 (HRFI…LSLV), 230–250 (LVIQ…SSVI), 279–299 (GFIG…YVLS), and 357–377 (IALS…ASGF).

It belongs to the CDS family. In terms of assembly, homodimer. Interacts with FOS; this interaction may enhance catalytic activity. The cofactor is Mg(2+). In terms of tissue distribution, expressed in adult tissues such as placenta, brain, small intestine, ovary, testis and prostate. Highly expressed in fetal kidney, lung and brain. Lower level in fetal liver.

It localises to the endoplasmic reticulum membrane. The catalysed reaction is a 1,2-diacyl-sn-glycero-3-phosphate + CTP + H(+) = a CDP-1,2-diacyl-sn-glycerol + diphosphate. It carries out the reaction 1-octadecanoyl-2-(5Z,8Z,11Z,14Z-eicosatetraenoyl)-sn-glycero-3-phosphate + CTP + H(+) = 1-octadecanoyl-2-(5Z,8Z,11Z,14Z-eicosatetraenoyl)-sn-glycero-3-cytidine-5'-diphosphate + diphosphate. The enzyme catalyses 1-octadecanoyl-2-(9Z,12Z-octadecadienoyl)-sn-glycero-3-phosphate + CTP + H(+) = 1-octadecanoyl-2-(9Z,12Z-octadecadienoyl)-sn-glycero-3-cytidine-5'-diphosphate + diphosphate. It catalyses the reaction 1-hexadecanoyl-2-(5Z,8Z,11Z,14Z-eicosatetraenoyl)-sn-glycero-3-phosphate + CTP + H(+) = 1-hexadecanoyl-2-(5Z,8Z,11Z,14Z-eicosatetraenoyl)-sn-glycero-3-cytidine-5'-diphosphate + diphosphate. The catalysed reaction is 1,2-di-(5Z,8Z,11Z,14Z)-eicosatetraenoyl-sn-glycero-3-phosphate + CTP + H(+) = 1,2-di-(5Z,8Z,11Z,14Z-eicosatetraenoyl)-sn-glycero-3-cytidine-5'-diphosphate + diphosphate. It carries out the reaction 1-octadecanoyl-2-(9Z-octadecenoyl)-sn-glycero-3-phosphate + CTP + H(+) = 1-octadecanoyl-2-(9Z-octadecenoyl)-sn-glycero-3-cytidine-5'-diphosphate + diphosphate. The enzyme catalyses 1-octadecanoyl-2-(4Z,7Z,10Z,13Z,16Z,19Z-docosahexaenoyl)-sn-glycero-3-phosphate + CTP + H(+) = 1-octadecanoyl-2-(4Z,7Z,10Z,13Z,16Z,19Z-docosahexaenoyl)-sn-glycero-3-cytidine-5'-diphosphate + diphosphate. It catalyses the reaction 1,2-di-(9Z,12Z-octadecadienoyl)-sn-glycero-3-phosphate + CTP + H(+) = 1,2-di-(9Z,12Z-octadecadienoyl)-sn-glycero-3-cytidine-5'-diphosphate + diphosphate. The catalysed reaction is 1,2-di-(9Z-octadecenoyl)-sn-glycero-3-phosphate + CTP + H(+) = 1,2-di-(9Z-octadecenoyl)-sn-glycero-3-cytidine-5'-diphosphate + diphosphate. It participates in phospholipid metabolism; CDP-diacylglycerol biosynthesis; CDP-diacylglycerol from sn-glycerol 3-phosphate: step 3/3. Inhibited by its anionic phospholipid end products, with phosphatidylinositol-(4,5)- bisphosphate showing the strongest inhibition. Its function is as follows. Catalyzes the conversion of phosphatidic acid (PA) to CDP-diacylglycerol (CDP-DAG), an essential intermediate in the synthesis of phosphatidylglycerol, cardiolipin and phosphatidylinositol. Exhibits almost no acyl chain preference for PA, showing no discrimination for the sn-1/sn-2 acyl chain composition of PAs. Plays an important role in regulating the growth of lipid droplets which are storage organelles at the center of lipid and energy homeostasis. Positively regulates the differentiation and development of adipocytes. The chain is Phosphatidate cytidylyltransferase 1 from Homo sapiens (Human).